Reading from the N-terminus, the 22-residue chain is Rothein 4.1 (22 aa).

The protein belongs to the frog skin active peptide (FSAP) family. Rothein subfamily. Expressed by the skin dorsal glands.

Its subcellular location is the secreted. Lacks antimicrobial activity. Does not inhibit the formation of NO by neuronal nitric oxide. This is Rothein 4.1 from Litoria rothii (Roth's tree frog).